We begin with the raw amino-acid sequence, 532 residues long: Bifunctional purine biosynthesis protein PurH (532 aa).

The MGS-like domain occupies 1 to 149 (MTDPAPLTRA…KNHGAVTVLT (149 aa)).

It belongs to the PurH family.

The catalysed reaction is (6R)-10-formyltetrahydrofolate + 5-amino-1-(5-phospho-beta-D-ribosyl)imidazole-4-carboxamide = 5-formamido-1-(5-phospho-D-ribosyl)imidazole-4-carboxamide + (6S)-5,6,7,8-tetrahydrofolate. It catalyses the reaction IMP + H2O = 5-formamido-1-(5-phospho-D-ribosyl)imidazole-4-carboxamide. It participates in purine metabolism; IMP biosynthesis via de novo pathway; 5-formamido-1-(5-phospho-D-ribosyl)imidazole-4-carboxamide from 5-amino-1-(5-phospho-D-ribosyl)imidazole-4-carboxamide (10-formyl THF route): step 1/1. It functions in the pathway purine metabolism; IMP biosynthesis via de novo pathway; IMP from 5-formamido-1-(5-phospho-D-ribosyl)imidazole-4-carboxamide: step 1/1. In Jannaschia sp. (strain CCS1), this protein is Bifunctional purine biosynthesis protein PurH.